Reading from the N-terminus, the 179-residue chain is Crossover junction endodeoxyribonuclease RuvC (179 aa).

Catalysis depends on residues aspartate 7 and glutamate 67. The Mn(2+) site is built by aspartate 7 and glutamate 67. A DNA-binding loop motif is present at residues aspartate 68–glutamine 74. Catalysis depends on residues histidine 139 and aspartate 142. Mn(2+) is bound at residue histidine 139.

Belongs to the RuvC family. Homodimer which binds Holliday junction (HJ) DNA. The HJ becomes 2-fold symmetrical on binding to RuvC with unstacked arms; it has a different conformation from HJ DNA in complex with RuvA. In the full resolvosome a probable DNA-RuvA(4)-RuvB(12)-RuvC(2) complex forms which resolves the HJ. It depends on Mn(2+) as a cofactor.

It is found in the cytoplasm. The catalysed reaction is Endonucleolytic cleavage at a junction such as a reciprocal single-stranded crossover between two homologous DNA duplexes (Holliday junction).. In terms of biological role, the RuvA-RuvB-RuvC complex processes Holliday junction (HJ) DNA during genetic recombination and DNA repair. Endonuclease that resolves HJ intermediates. Cleaves cruciform DNA by making single-stranded nicks across the HJ at symmetrical positions within the homologous arms, probably yielding a 5'-phosphate and a 3'-hydroxyl group; requires a central core of homology in the junction. The consensus cleavage sequence is 5'-(G/C)TC(C/G)-3' (a different site than E.coli); cleavage occurs on the 3'-side of the TC dinucleotide at the point of strand exchange. Also resolves nicked HJ intermediates, replication forks and Y-junction DNA in vitro. HJ branch migration catalyzed by RuvA-RuvB allows RuvC to scan DNA until it finds its consensus sequence, where it cleaves and resolves the cruciform DNA. Binds HJ DNA independently of homologous core or consensus sequence; Mn(2+) is not essential for binding but improves it, while &gt;1.0 mM Mg(2+) inhibit binding. Also binds Y-junction DNA less well. Requires a homologous core to cleave DNA. Another study shows divalent cations (Mn(2+), Mg(2+) and Ca(2+), tested up to 5.0 mM) improve DNA binding considerably over binding in their absence. The chain is Crossover junction endodeoxyribonuclease RuvC from Deinococcus radiodurans (strain ATCC 13939 / DSM 20539 / JCM 16871 / CCUG 27074 / LMG 4051 / NBRC 15346 / NCIMB 9279 / VKM B-1422 / R1).